The sequence spans 84 residues: Hepcidin (84 aa).

The signal sequence occupies residues 1-24; it reads MALSSQIWAACLLLLLLLASLTSG. Positions 25–54 are excised as a propeptide; sequence SVFPQQTGQLAELQPQDRAGARASWMPMFQ. Intrachain disulfides connect C66–C82, C69–C72, C70–C78, and C73–C81.

The protein belongs to the hepcidin family. As to quaternary structure, interacts with SLC40A1; this interaction promotes SLC40A1 rapid ubiquitination. As to expression, highest expression in liver and to a lesser extent in heart and brain. Low levels in lung, tonsils, salivary gland, trachea, prostate gland, adrenal gland and thyroid gland. Secreted into the urine and blood. Expressed by hepatocytes.

It localises to the secreted. In terms of biological role, liver-produced hormone that constitutes the main circulating regulator of iron absorption and distribution across tissues. Acts by promoting endocytosis and degradation of ferroportin/SLC40A1, leading to the retention of iron in iron-exporting cells and decreased flow of iron into plasma. Controls the major flows of iron into plasma: absorption of dietary iron in the intestine, recycling of iron by macrophages, which phagocytose old erythrocytes and other cells, and mobilization of stored iron from hepatocytes. Has strong antimicrobial activity against E.coli ML35P N.cinerea and weaker against S.epidermidis, S.aureus and group b streptococcus bacteria. Active against the fungus C.albicans. No activity against P.aeruginosa. The polypeptide is Hepcidin (Homo sapiens (Human)).